A 257-amino-acid chain; its full sequence is Protein THYLAKOID ASSEMBLY 8-like, chloroplastic (257 aa).

Residues 1–55 (MTAIRVCSRKFPTFASIFFQNITRNPSIHRISFSNLKPKTLLHPIPPKPFTVFVS) constitute a chloroplast transit peptide. 2 PPR repeats span residues 142–176 (DVFM…NLFP) and 177–211 (DSQT…PDPP).

The protein belongs to the PPR family. P subfamily.

It localises to the plastid. The protein resides in the chloroplast. Functionally, binds weakly to specific single strand RNA (ssRNA). The sequence is that of Protein THYLAKOID ASSEMBLY 8-like, chloroplastic from Arabidopsis thaliana (Mouse-ear cress).